Here is a 158-residue protein sequence, read N- to C-terminus: RNA pyrophosphohydrolase (158 aa).

In terms of domain architecture, Nudix hydrolase spans P9–E151. The Nudix box signature appears at G43–S64.

Belongs to the Nudix hydrolase family. RppH subfamily. The cofactor is a divalent metal cation.

Functionally, accelerates the degradation of transcripts by removing pyrophosphate from the 5'-end of triphosphorylated RNA, leading to a more labile monophosphorylated state that can stimulate subsequent ribonuclease cleavage. This Pelagibacter ubique (strain HTCC1062) protein is RNA pyrophosphohydrolase.